Here is a 175-residue protein sequence, read N- to C-terminus: Small ribosomal subunit protein uS5 (175 aa).

The S5 DRBM domain maps to 19 to 82; it reads WVDRLVSVNR…DDAKKNVIRV (64 aa).

This sequence belongs to the universal ribosomal protein uS5 family. As to quaternary structure, part of the 30S ribosomal subunit. Contacts proteins S4 and S8.

With S4 and S12 plays an important role in translational accuracy. In terms of biological role, located at the back of the 30S subunit body where it stabilizes the conformation of the head with respect to the body. The chain is Small ribosomal subunit protein uS5 from Salinibacter ruber (strain DSM 13855 / M31).